The sequence spans 332 residues: tRNA N6-adenosine threonylcarbamoyltransferase (332 aa).

H108 and H112 together coordinate Fe cation. Substrate contacts are provided by residues 129-133, D161, E178, and S258; that span reads LISGG. Fe cation is bound at residue D286.

This sequence belongs to the KAE1 / TsaD family. Fe(2+) is required as a cofactor.

Its subcellular location is the cytoplasm. It catalyses the reaction L-threonylcarbamoyladenylate + adenosine(37) in tRNA = N(6)-L-threonylcarbamoyladenosine(37) in tRNA + AMP + H(+). Its function is as follows. Required for the formation of a threonylcarbamoyl group on adenosine at position 37 (t(6)A37) in tRNAs that read codons beginning with adenine. Is probably involved in the transfer of the threonylcarbamoyl moiety of threonylcarbamoyl-AMP (TC-AMP) to the N6 group of A37. This Pyrobaculum arsenaticum (strain DSM 13514 / JCM 11321 / PZ6) protein is tRNA N6-adenosine threonylcarbamoyltransferase.